Consider the following 682-residue polypeptide: Tetratricopeptide repeat protein 39B (682 aa).

2 TPR repeats span residues 393-426 (SLVLFYHARIELLKGNLEEAQEVFQKCISVQEEW) and 626-659 (PFTLFELASLYKSQGEIDKAIKFLETARNNYKDY).

The protein belongs to the TTC39 family.

Its function is as follows. Regulates high density lipoprotein (HDL) cholesterol metabolism by promoting the ubiquitination and degradation of the oxysterols receptors LXR (NR1H2 and NR1H3). The chain is Tetratricopeptide repeat protein 39B from Homo sapiens (Human).